The sequence spans 648 residues: Probable alpha-galactosidase D (648 aa).

Positions 1-17 are cleaved as a signal peptide; sequence MESIVWLLLLSPALVAG. Residues Asn-84 and Asn-90 are each glycosylated (N-linked (GlcNAc...) asparagine). Cys-123 and Cys-156 are disulfide-bonded. The Nucleophile role is filled by Asp-154. Substrate is bound at residue 199–203; it reads EWGID. Asp-221 acts as the Proton donor in catalysis. N-linked (GlcNAc...) asparagine glycans are attached at residues Asn-339, Asn-505, and Asn-572.

This sequence belongs to the glycosyl hydrolase 27 family.

The protein resides in the secreted. It catalyses the reaction Hydrolysis of terminal, non-reducing alpha-D-galactose residues in alpha-D-galactosides, including galactose oligosaccharides, galactomannans and galactolipids.. Functionally, hydrolyzes a variety of simple alpha-D-galactoside as well as more complex molecules such as oligosaccharides and polysaccharides. This is Probable alpha-galactosidase D (aglD) from Neosartorya fischeri (strain ATCC 1020 / DSM 3700 / CBS 544.65 / FGSC A1164 / JCM 1740 / NRRL 181 / WB 181) (Aspergillus fischerianus).